A 443-amino-acid polypeptide reads, in one-letter code: Zinc finger CCCH domain-containing protein 63 (443 aa).

Disordered stretches follow at residues 1–29 (MDFD…MAPT) and 56–99 (LPGP…SSSW). 2 consecutive C3H1-type zinc fingers follow at residues 30–56 (DTRQ…HREL) and 109–136 (TKTE…HCWS). 6 WD repeats span residues 149–190 (GHEK…GVLK), 228–265 (GPVG…NCFE), 272–311 (GHTL…QTLT), 313–349 (HSSV…NLEV), 354–396 (KEEH…LFIR), and 404–442 (FAKQ…TAAL).

In Arabidopsis thaliana (Mouse-ear cress), this protein is Zinc finger CCCH domain-containing protein 63 (ZFWD2).